We begin with the raw amino-acid sequence, 206 residues long: Large ribosomal subunit protein uL4 (206 aa).

The tract at residues 45–85 (QGNRAQKDREQVKHTTKKPWRQKGTGRARAGMSSSPLWRGG) is disordered. Residues 58-70 (HTTKKPWRQKGTG) are compositionally biased toward basic residues.

This sequence belongs to the universal ribosomal protein uL4 family. In terms of assembly, part of the 50S ribosomal subunit.

Functionally, one of the primary rRNA binding proteins, this protein initially binds near the 5'-end of the 23S rRNA. It is important during the early stages of 50S assembly. It makes multiple contacts with different domains of the 23S rRNA in the assembled 50S subunit and ribosome. Its function is as follows. Forms part of the polypeptide exit tunnel. The sequence is that of Large ribosomal subunit protein uL4 from Burkholderia mallei (strain NCTC 10247).